Here is a 264-residue protein sequence, read N- to C-terminus: Tryptophan synthase alpha chain (264 aa).

Active-site proton acceptor residues include Glu49 and Asp60.

The protein belongs to the TrpA family. As to quaternary structure, tetramer of two alpha and two beta chains.

It catalyses the reaction (1S,2R)-1-C-(indol-3-yl)glycerol 3-phosphate + L-serine = D-glyceraldehyde 3-phosphate + L-tryptophan + H2O. It functions in the pathway amino-acid biosynthesis; L-tryptophan biosynthesis; L-tryptophan from chorismate: step 5/5. In terms of biological role, the alpha subunit is responsible for the aldol cleavage of indoleglycerol phosphate to indole and glyceraldehyde 3-phosphate. In Picosynechococcus sp. (strain ATCC 27264 / PCC 7002 / PR-6) (Agmenellum quadruplicatum), this protein is Tryptophan synthase alpha chain.